The primary structure comprises 321 residues: MFNELVKKIKSGLEITFEEALALGGLDEDRLNELFLAALQVNRHFHGNRVDLCSIVNARSGRCSEDCAFCAQSGHYRTEAPVYPLLSKEEILERAREMELRGARRFALVTSGRGISESDFEKVLDIYQMLKEKTGLGLCASLGIIGYDKAVRLKEAGVGMYHHNLETCRSYFPHICTTHSFDERVETVKAAKEAGLEVCSGGIIGLGESWRHRVEMAFHLKELGVASVPINILTPVKGTPLWGRPLLEPVEVLRTAAMFRLVLPGALIRLCGGREAALRDLQPLALLAGVNALMVGNYLTTSGRRVEDDLQMVADLKLSVM.

The region spanning 45 to 274 (FHGNRVDLCS…GALIRLCGGR (230 aa)) is the Radical SAM core domain. Residues C63, C67, and C70 each coordinate [4Fe-4S] cluster. 3 residues coordinate [2Fe-2S] cluster: C139, C199, and R269.

Belongs to the radical SAM superfamily. Biotin synthase family. Homodimer. Requires [4Fe-4S] cluster as cofactor. [2Fe-2S] cluster serves as cofactor.

The enzyme catalyses (4R,5S)-dethiobiotin + (sulfur carrier)-SH + 2 reduced [2Fe-2S]-[ferredoxin] + 2 S-adenosyl-L-methionine = (sulfur carrier)-H + biotin + 2 5'-deoxyadenosine + 2 L-methionine + 2 oxidized [2Fe-2S]-[ferredoxin]. Its pathway is cofactor biosynthesis; biotin biosynthesis; biotin from 7,8-diaminononanoate: step 2/2. Functionally, catalyzes the conversion of dethiobiotin (DTB) to biotin by the insertion of a sulfur atom into dethiobiotin via a radical-based mechanism. This is Biotin synthase from Pelotomaculum thermopropionicum (strain DSM 13744 / JCM 10971 / SI).